Consider the following 501-residue polypeptide: ADP,ATP carrier protein 3 (501 aa).

12 helical membrane passes run 23-43 (LKLF…FGAL), 59-79 (IISL…TVLY), 90-110 (YIFY…AYII), 146-166 (YALM…LMFW), 183-203 (PVLG…LVFF), 227-247 (IMLQ…MLLF), 293-313 (IALL…PWKA), 326-346 (FNFM…FMVI), 361-381 (LLTP…IIFI), 383-403 (EIGA…VGAI), 446-466 (FGKS…PTAT), and 470-490 (IIIY…WNVI).

Belongs to the ADP/ATP translocase tlc family.

It is found in the cell membrane. Functionally, provides the rickettsial cell with host ATP in exchange for rickettsial ADP. This is an obligate exchange system. This energy acquiring activity is an important component of rickettsial parasitism. This chain is ADP,ATP carrier protein 3 (tlcC), found in Rickettsia felis (strain ATCC VR-1525 / URRWXCal2) (Rickettsia azadi).